The sequence spans 429 residues: Phosphoglucosamine mutase (429 aa).

Serine 96 (phosphoserine intermediate) is an active-site residue. Mg(2+)-binding residues include serine 96, aspartate 230, aspartate 232, and aspartate 234. The residue at position 96 (serine 96) is a Phosphoserine.

The protein belongs to the phosphohexose mutase family. It depends on Mg(2+) as a cofactor. In terms of processing, activated by phosphorylation.

The catalysed reaction is alpha-D-glucosamine 1-phosphate = D-glucosamine 6-phosphate. In terms of biological role, catalyzes the conversion of glucosamine-6-phosphate to glucosamine-1-phosphate. The protein is Phosphoglucosamine mutase of Thermotoga petrophila (strain ATCC BAA-488 / DSM 13995 / JCM 10881 / RKU-1).